We begin with the raw amino-acid sequence, 691 residues long: Solute carrier family 28 member 3 (691 aa).

The interval 1 to 78 is disordered; it reads MELRSTAAPR…HMEDDDEEMQ (78 aa). Topologically, residues 1-102 are cytoplasmic; it reads MELRSTAAPR…FCRKHKTTLR (102 aa). The segment covering 21–30 has biased composition (low complexity); it reads NEENFLENEN. Residues 31–42 show a composition bias toward polar residues; it reads TSGNNSIRSRAV. Over residues 43–54 the composition is skewed to basic and acidic residues; sequence QSREHTNTKQDE. A helical membrane pass occupies residues 103 to 123; sequence HIIWGILLAGYLVMVISACVL. Residues 124–128 are Extracellular-facing; the sequence is NFHRA. Residues 129 to 149 form a helical membrane-spanning segment; the sequence is LPLFVITVAAIFFVVWDHLMA. Residues 150–173 lie on the Cytoplasmic side of the membrane; that stretch reads KYEHRIDEMLSPGRRLLNSHWFWL. A helical membrane pass occupies residues 174-194; the sequence is KWVIWSSLVLAVIFWLAFDTA. Residues 195–197 are Extracellular-facing; sequence KLG. Residues 198 to 219 form a helical membrane-spanning segment; sequence QQQLVSFGGLIMYIVLLFLFSK. Over 220–227 the chain is Cytoplasmic; the sequence is YPTRVYWR. Residues 228–247 traverse the membrane as a helical segment; sequence PVLWGIGLQFLLGLLILRTD. Residues 248 to 284 are Extracellular-facing; the sequence is PGFIAFDWLGRQVQTFLEYTDAGASFVFGEKYKDHFF. A helical transmembrane segment spans residues 285–305; the sequence is AFKVLPIVVFFSTVMSMLYYL. Over 306–329 the chain is Cytoplasmic; sequence GLMQWIIRKVGWIMLVTTGSSPIE. The segment at residues 330–348 is an intramembrane region (helical); the sequence is SVVASGNIFVGQTESPLLV. Topologically, residues 349–361 are cytoplasmic; sequence RPYLPYITKSELH. The helical transmembrane segment at 362 to 384 threads the bilayer; sequence AIMTAGFSTIAGSVLGAYISFGV. Topologically, residues 385-386 are extracellular; that stretch reads PS. A helical membrane pass occupies residues 387–408; the sequence is SHLLTASVMSAPASLAAAKLFW. Residues 409-443 lie on the Cytoplasmic side of the membrane; it reads PETEKPKITLKNAMKMESGDSGNLLEAATQGASSS. Residues 444–469 traverse the membrane as a helical segment; sequence ISLVANIAVNLIAFLALLSFMNSALS. The Extracellular portion of the chain corresponds to 470–507; it reads WFGNMFDYPQLSFELICSYIFMPFSFMMGVEWQDSFMV. The segment at residues 508–527 is an intramembrane region (helical); it reads ARLIGYKTFFNEFVAYEHLS. The Extracellular portion of the chain corresponds to 528–566; sequence KWIHLRKEGGPKFVNGVQQYISIRSEIIATYALCGFANI. Residues 567–577 traverse the membrane as a helical segment; sequence GSLGIVIGGLT. The Cytoplasmic segment spans residues 578 to 590; that stretch reads SMAPSRKRDIASG. Residues 591–613 traverse the membrane as a helical segment; that stretch reads AVRALIAGTVACFMTACIAGILS. The Extracellular portion of the chain corresponds to 614–691; that stretch reads STPVDINCHH…FNCNGISNTF (78 aa).

Belongs to the concentrative nucleoside transporter (CNT) (TC 2.A.41) family. In terms of assembly, homotrimer. Expressed in pancreas, bone marrow, trachea, mammary gland, liver, prostate, and regions of intestine, brain, lung, placenta, testis, kidney, and heart.

The protein resides in the cell membrane. It localises to the endoplasmic reticulum membrane. It carries out the reaction thymidine(out) + 2 Na(+)(out) = thymidine(in) + 2 Na(+)(in). The enzyme catalyses cytidine(out) + 2 Na(+)(out) = cytidine(in) + 2 Na(+)(in). It catalyses the reaction uridine(out) + 2 Na(+)(out) = uridine(in) + 2 Na(+)(in). The catalysed reaction is adenosine(out) + 2 Na(+)(out) = adenosine(in) + 2 Na(+)(in). It carries out the reaction guanosine(out) + 2 Na(+)(out) = guanosine(in) + 2 Na(+)(in). The enzyme catalyses inosine(out) + 2 Na(+)(out) = inosine(in) + 2 Na(+)(in). Its function is as follows. Sodium-dependent, pyrimidine- and purine-selective. Involved in the homeostasis of endogenous nucleosides. Exhibits the transport characteristics of the nucleoside transport system cib or N3 subtype (N3/cib) (with marked transport of both thymidine and inosine). Employs a 2:1 sodium/nucleoside ratio. Transports uridine. Also able to transport gemcitabine, 3'-azido-3'-deoxythymidine (AZT), ribavirin and 3-deazauridine. This is Solute carrier family 28 member 3 (SLC28A3) from Homo sapiens (Human).